Consider the following 148-residue polypeptide: Putative nickel-responsive regulator (148 aa).

His-77, His-88, His-90, and Cys-96 together coordinate Ni(2+).

This sequence belongs to the transcriptional regulatory CopG/NikR family. Ni(2+) is required as a cofactor.

In terms of biological role, transcriptional regulator. The protein is Putative nickel-responsive regulator of Bradyrhizobium diazoefficiens (strain JCM 10833 / BCRC 13528 / IAM 13628 / NBRC 14792 / USDA 110).